A 343-amino-acid chain; its full sequence is Probable fructokinase-7 (343 aa).

N-acetylglycine is present on Gly2.

The protein belongs to the carbohydrate kinase PfkB family.

It carries out the reaction D-fructose + ATP = D-fructose 6-phosphate + ADP + H(+). Its pathway is glycan biosynthesis; starch biosynthesis. May play an important role in maintaining the flux of carbon towards starch formation. This is Probable fructokinase-7 from Arabidopsis thaliana (Mouse-ear cress).